Consider the following 675-residue polypeptide: Acetyl-coenzyme A synthetase 1 (675 aa).

The span at 1-10 shows a compositional bias: polar residues; the sequence is MPESTQQSHL. The disordered stretch occupies residues 1–32; sequence MPESTQQSHLSLDHEKMQQPPKGFTERSKTKP. Residues 212 to 215 and T331 contribute to the CoA site; that span reads RGGK. Residues 407–409, 431–436, D522, and R537 contribute to the ATP site; these read GEP and DTYWQT. S545 serves as a coordination point for CoA. Residue R548 participates in ATP binding. A CoA-binding site is contributed by R609.

The protein belongs to the ATP-dependent AMP-binding enzyme family.

The catalysed reaction is acetate + ATP + CoA = acetyl-CoA + AMP + diphosphate. The chain is Acetyl-coenzyme A synthetase 1 (ACS1) from Candida albicans (Yeast).